The following is a 685-amino-acid chain: N(6)-adenosine-methyltransferase MT-A70-like (685 aa).

Residues D464–I465 and D482 each bind S-adenosyl-L-methionine. Residues R552–H565 are positively charged region required for RNA-binding. S-adenosyl-L-methionine-binding positions include K599, R622–N625, and N635–Q636. A disordered region spans residues E657 to A685. Residue S664 is modified to Phosphoserine.

This sequence belongs to the MT-A70-like family. Interacts with FIP37. Interacts with MTB. Associates with MTB, FIP37, VIR and HAKAI to form the m6A writer complex which is essential for adenosine methylation at specific mRNA sequences.

It localises to the nucleus. The catalysed reaction is an adenosine in mRNA + S-adenosyl-L-methionine = an N(6)-methyladenosine in mRNA + S-adenosyl-L-homocysteine + H(+). In terms of biological role, catalytic subunit of the N6-methyltransferase complex, a multiprotein complex that mediates N6-methyladenosine (m6A) methylation at the 5'-[AG]GAC-3' consensus sites of some mRNAs. Associates with MTB, FIP37, VIR and HAKAI to form the m6A writer complex which is essential for adenosine methylation at specific mRNA sequences. N6-methyladenosine (m6A) plays a role in mRNA stability, processing, translation efficiency and editing. The protein is N(6)-adenosine-methyltransferase MT-A70-like of Arabidopsis thaliana (Mouse-ear cress).